A 546-amino-acid polypeptide reads, in one-letter code: 2-isopropylmalate synthase (546 aa).

In terms of domain architecture, Pyruvate carboxyltransferase spans 8-271; it reads ILIFDTTLRD…NSFFKRNPDS (264 aa). Positions 17, 208, 210, and 244 each coordinate Mn(2+). The interval 408–546 is regulatory domain; it reads QLSLVQVSCG…TNTFLSNNAN (139 aa).

This sequence belongs to the alpha-IPM synthase/homocitrate synthase family. LeuA type 1 subfamily. Homodimer. Mn(2+) is required as a cofactor.

The protein localises to the cytoplasm. It catalyses the reaction 3-methyl-2-oxobutanoate + acetyl-CoA + H2O = (2S)-2-isopropylmalate + CoA + H(+). Its pathway is amino-acid biosynthesis; L-leucine biosynthesis; L-leucine from 3-methyl-2-oxobutanoate: step 1/4. Catalyzes the condensation of the acetyl group of acetyl-CoA with 3-methyl-2-oxobutanoate (2-ketoisovalerate) to form 3-carboxy-3-hydroxy-4-methylpentanoate (2-isopropylmalate). This is 2-isopropylmalate synthase from Prochlorococcus marinus (strain AS9601).